The chain runs to 146 residues: MTGDKPFWETKRLDEMTRAEWESLCDGCGKCCLHKLEDEETGELMATNVACRLLDRRTGLCKDYKHRRTFVPECVRLTPRVLREIDWLPSTCAYRLLDEGQPLPDWHPLVSGDPESVHKAGVSVRGWTVSEDEAGDLEHHLVDRQL.

Belongs to the UPF0260 family.

The polypeptide is UPF0260 protein Swit_2819 (Rhizorhabdus wittichii (strain DSM 6014 / CCUG 31198 / JCM 15750 / NBRC 105917 / EY 4224 / RW1) (Sphingomonas wittichii)).